Consider the following 454-residue polypeptide: ABSCISIC ACID-INSENSITIVE 5-like protein 6 (454 aa).

Phosphoserine occurs at positions 32, 55, and 126. Thr169 is modified (phosphothreonine). A bZIP domain is found at 372 to 435 (IERRQKRMIK…KNQLLEPLRQ (64 aa)). Residues 374–393 (RRQKRMIKNRESAARSRARK) are basic motif. The segment at 400 to 414 (LEAEIAQLKELNEEL) is leucine-zipper.

Belongs to the bZIP family. ABI5 subfamily. As to quaternary structure, DNA-binding heterodimer. Interacts with ABI3 and the AFP proteins AFP1, AFP2, AFP3 and AFP4. Expressed in roots and flowers.

Its subcellular location is the nucleus. Its function is as follows. Binds to the ABA-responsive element (ABRE). Mediates stress-responsive ABA signaling. This is ABSCISIC ACID-INSENSITIVE 5-like protein 6 (ABF3) from Arabidopsis thaliana (Mouse-ear cress).